The chain runs to 495 residues: MMITGSSLYAAIDLGSNSFHMLVVREVAGSIQTLTRIKRKVRLAAGLSQDNHLSPEAMERGWQCLRLFAERLQDIPHNQIRVVATATLRLAVNSVDFIAKAQEILGCPVQVISGEEEARLIYQGVAHTTGGDDRRLVVDIGGASTELVTGTGAQATSLFSLSMGCVTWLERYFTDRNLAQENFDEAENAAREVLRPVMDKLRYHGWKVCVGASGTVQALQEIMMAQGMDERITLAKLQQLKQRAIQCGRLEELEIEGLTLERALVFPSGLAILIAIFSELDIHCMTLAGGALREGLVYGMLHLAVEQDIRSRTLRNVQRRFIVDTEQAQRVAQLASSFANQLKTTWALEPLSQDLLISACALHEMGLSIDFKQAPIHAAYLVRNLDLPGFTPAQKKLLATLLLNQTNTVDLSSLHQQNAVPPRVAEHLCRLLRLAILFASRRRDDLLPAIKLEAEGENLTLTLPEDWLDNHPLGAEMIEQEYQWQSYVHWALEVK.

This sequence belongs to the GppA/Ppx family. GppA subfamily.

The catalysed reaction is guanosine 3'-diphosphate 5'-triphosphate + H2O = guanosine 3',5'-bis(diphosphate) + phosphate + H(+). It participates in purine metabolism; ppGpp biosynthesis; ppGpp from GTP: step 2/2. In terms of biological role, catalyzes the conversion of pppGpp to ppGpp. Guanosine pentaphosphate (pppGpp) is a cytoplasmic signaling molecule which together with ppGpp controls the 'stringent response', an adaptive process that allows bacteria to respond to amino acid starvation, resulting in the coordinated regulation of numerous cellular activities. The chain is Guanosine-5'-triphosphate,3'-diphosphate pyrophosphatase from Enterobacter sp. (strain 638).